The primary structure comprises 166 residues: Small ribosomal subunit protein uS5 (166 aa).

Positions 11–74 constitute an S5 DRBM domain; sequence LQEKLIAVNR…EKARRNMMNV (64 aa).

The protein belongs to the universal ribosomal protein uS5 family. In terms of assembly, part of the 30S ribosomal subunit. Contacts proteins S4 and S8.

With S4 and S12 plays an important role in translational accuracy. Its function is as follows. Located at the back of the 30S subunit body where it stabilizes the conformation of the head with respect to the body. The chain is Small ribosomal subunit protein uS5 from Sodalis glossinidius (strain morsitans).